The sequence spans 1005 residues: Regulator of telomere elongation helicase 1 homolog (1005 aa).

A Helicase ATP-binding domain is found at 7 to 322; sequence AGIPVHFPFE…KEMLLELEKA (316 aa). 42–49 contributes to the ATP binding site; sequence SPTGTGKT. Residues C145, C163, C172, and C208 each contribute to the [4Fe-4S] cluster site. Positions 251–254 match the DEAH box motif; sequence DEAH. A Phosphothreonine modification is found at T876. The segment at 893 to 917 is disordered; sequence NGPLKTEPSEPATTSSSFCPTPAQS.

The protein belongs to the helicase family. RAD3/XPD subfamily.

The protein localises to the nucleus. The enzyme catalyses ATP + H2O = ADP + phosphate + H(+). Its function is as follows. A probable ATP-dependent DNA helicase implicated in DNA repair and the maintenance of genomic stability. Acts as an anti-recombinase to counteract toxic recombination and limit crossover during meiosis. Regulates meiotic recombination and crossover homeostasis by physically dissociating strand invasion events and thereby promotes noncrossover repair by meiotic synthesis dependent strand annealing (SDSA) as well as disassembly of D loop recombination intermediates. The sequence is that of Regulator of telomere elongation helicase 1 homolog from Drosophila virilis (Fruit fly).